We begin with the raw amino-acid sequence, 309 residues long: Heme-dependent oxidative N-demethylase beta subunit (309 aa).

Residues 2-103 form the FAD-binding FR-type domain; that stretch reads STLLDVRVAA…SPPANLFPLH (102 aa). The 2Fe-2S ferredoxin-type domain maps to 226–309; the sequence is FRVELARSGQ…GCGSPILLDL (84 aa). 4 residues coordinate [2Fe-2S] cluster: C260, C265, C268, and C296.

This sequence belongs to the PDR/VanB family. As to quaternary structure, the heme-dependent oxidative N-demethylase (HODM) is a heterotetramer composed of a catalytic alpha subunit, a FMN/2Fe-2S-dependent oxidoreductase beta subunit, a gamma subunit with putative aminotransferase activity, and a delta subunit of unknown function. Requires [2Fe-2S] cluster as cofactor. The cofactor is FMN.

Functionally, component of the heme-dependent oxidative N-demethylase (HODM) enzyme, that catalyzes the NADPH-dependent oxidation of dimethylamine (DMA) to methylamine (MA) and formaldehyde. Functions in bacterial methylated amine catabolism, linking alkylamine oxidation to the tetrahydrofolate C1 pool. The beta subunit of HODM binds FMN and a 2Fe-2S cluster, and likely reduces the ferric heme iron of the alpha subunit to ferrous using NADPH. The chain is Heme-dependent oxidative N-demethylase beta subunit from Ectopseudomonas mendocina (strain ymp) (Pseudomonas mendocina).